The sequence spans 356 residues: Chavicol O-methyltransferase (356 aa).

The S-adenosyl-L-methionine site is built by Gly202, Asp225, Asp245, Met246, and Lys259. His263 functions as the Proton acceptor in the catalytic mechanism.

This sequence belongs to the class I-like SAM-binding methyltransferase superfamily. Cation-independent O-methyltransferase family. COMT subfamily. In terms of assembly, homodimer. As to expression, specifically expressed in the peltate glandular trichomes on the surface of the young basil leaves.

It carries out the reaction (E)-isoeugenol + S-adenosyl-L-methionine = (E)-isomethyleugenol + S-adenosyl-L-homocysteine + H(+). It participates in aromatic compound metabolism; phenylpropanoid biosynthesis. Phenylpropene O-methyltransferase that catalyzes the methylation of the para-4-hydroxyl of chavicol to methylchavicol. Can also convert eugenol to methyleugenol but with less affinity. The sequence is that of Chavicol O-methyltransferase (CVOMT1) from Ocimum basilicum (Sweet basil).